A 289-amino-acid polypeptide reads, in one-letter code: Formamidopyrimidine-DNA glycosylase (289 aa).

Catalysis depends on Pro-2, which acts as the Schiff-base intermediate with DNA. Glu-3 (proton donor) is an active-site residue. Lys-61 serves as the catalytic Proton donor; for beta-elimination activity. Residues His-96, Arg-115, and Lys-161 each coordinate DNA. An FPG-type zinc finger spans residues 247-281 (SAYGQEDRPCPRCGTAIRREKFMNRSSFSCPKCQR). The active-site Proton donor; for delta-elimination activity is the Arg-271.

Belongs to the FPG family. As to quaternary structure, monomer. Zn(2+) serves as cofactor.

It catalyses the reaction Hydrolysis of DNA containing ring-opened 7-methylguanine residues, releasing 2,6-diamino-4-hydroxy-5-(N-methyl)formamidopyrimidine.. The catalysed reaction is 2'-deoxyribonucleotide-(2'-deoxyribose 5'-phosphate)-2'-deoxyribonucleotide-DNA = a 3'-end 2'-deoxyribonucleotide-(2,3-dehydro-2,3-deoxyribose 5'-phosphate)-DNA + a 5'-end 5'-phospho-2'-deoxyribonucleoside-DNA + H(+). Functionally, involved in base excision repair of DNA damaged by oxidation or by mutagenic agents. Acts as a DNA glycosylase that recognizes and removes damaged bases. Has a preference for oxidized purines, such as 7,8-dihydro-8-oxoguanine (8-oxoG). Has AP (apurinic/apyrimidinic) lyase activity and introduces nicks in the DNA strand. Cleaves the DNA backbone by beta-delta elimination to generate a single-strand break at the site of the removed base with both 3'- and 5'-phosphates. The sequence is that of Formamidopyrimidine-DNA glycosylase from Rhodococcus opacus (strain B4).